A 460-amino-acid chain; its full sequence is Acetyl-CoA decarbonylase/synthase complex subunit beta (460 aa).

Cys-188, Cys-191, Cys-277, and Cys-279 together coordinate [Ni-Fe-S] cluster. Over residues 402–416 (EETEPEEEEVEEAYP) the composition is skewed to acidic residues. The interval 402-422 (EETEPEEEEVEEAYPEETPIP) is disordered.

Belongs to the CdhC family. As to quaternary structure, monomer. The ACDS complex is made up of alpha, epsilon, beta, gamma and delta chains with a probable stoichiometry of (alpha(2)epsilon(2))(4)-beta(8)-(gamma(1)delta(1))(8). [Ni-Fe-S] cluster serves as cofactor.

It carries out the reaction Co(I)-[corrinoid Fe-S protein] + acetyl-CoA + H(+) = methyl-Co(III)-[corrinoid Fe-S protein] + CO + CoA. In terms of biological role, part of a complex that catalyzes the reversible cleavage of acetyl-CoA, allowing autotrophic growth from CO(2). The alpha-epsilon complex generates CO from CO(2), while the beta subunit (this protein) combines the CO with CoA and a methyl group to form acetyl-CoA. The methyl group, which is incorporated into acetyl-CoA, is transferred to the beta subunit by a corrinoid iron-sulfur protein (the gamma-delta complex). The sequence is that of Acetyl-CoA decarbonylase/synthase complex subunit beta from Methanothermobacter thermautotrophicus (strain ATCC 29096 / DSM 1053 / JCM 10044 / NBRC 100330 / Delta H) (Methanobacterium thermoautotrophicum).